The following is a 462-amino-acid chain: 3-isopropylmalate dehydratase large subunit (462 aa).

[4Fe-4S] cluster contacts are provided by cysteine 337, cysteine 397, and cysteine 400.

This sequence belongs to the aconitase/IPM isomerase family. LeuC type 1 subfamily. In terms of assembly, heterodimer of LeuC and LeuD. [4Fe-4S] cluster serves as cofactor.

It carries out the reaction (2R,3S)-3-isopropylmalate = (2S)-2-isopropylmalate. It functions in the pathway amino-acid biosynthesis; L-leucine biosynthesis; L-leucine from 3-methyl-2-oxobutanoate: step 2/4. Catalyzes the isomerization between 2-isopropylmalate and 3-isopropylmalate, via the formation of 2-isopropylmaleate. The chain is 3-isopropylmalate dehydratase large subunit from Listeria monocytogenes serovar 1/2a (strain ATCC BAA-679 / EGD-e).